Here is a 329-residue protein sequence, read N- to C-terminus: Ig gamma-2C chain C region (329 aa).

Residues 1–97 (ARTTAPSVYP…ATKSNLIKRI (97 aa)) are CH1. An intrachain disulfide couples Cys27 to Cys82. The interval 98-113 (EPRRPKPRPPTDICSC) is hinge. Residues 114–222 (DDNLGRPSVF…PIEKTISKPR (109 aa)) form a CH2 region. 2 disulfide bridges follow: Cys143-Cys203 and Cys249-Cys307. The CH3 stretch occupies residues 223–329 (GKARTPQVYT…QKNLSRSPGK (107 aa)).

In Rattus norvegicus (Rat), this protein is Ig gamma-2C chain C region.